The primary structure comprises 110 residues: Insulin (110 aa).

Residues 1 to 24 form the signal peptide; sequence MALWMRLLPLLVLLALWGPDPASA. Disulfide bonds link C31–C96, C43–C109, and C95–C100. The propeptide at 57–87 is c peptide; the sequence is EAEDLQVGQVELGGGPGAGSLQPLALEGSLQ.

It belongs to the insulin family. Heterodimer of a B chain and an A chain linked by two disulfide bonds.

Its subcellular location is the secreted. Functionally, insulin decreases blood glucose concentration. It increases cell permeability to monosaccharides, amino acids and fatty acids. It accelerates glycolysis, the pentose phosphate cycle, and glycogen synthesis in liver. The protein is Insulin (INS) of Pan troglodytes (Chimpanzee).